We begin with the raw amino-acid sequence, 233 residues long: Fibrillarin-like rRNA/tRNA 2'-O-methyltransferase (233 aa).

S-adenosyl-L-methionine contacts are provided by residues 90–91 (TT), 109–110 (EF), 134–135 (DA), and 154–157 (DVAQ).

The protein belongs to the methyltransferase superfamily. Fibrillarin family. As to quaternary structure, interacts with nop5. Component of box C/D small ribonucleoprotein (sRNP) particles that contain rpl7ae, FlpA and nop5, plus a guide RNA.

Functionally, involved in pre-rRNA and tRNA processing. Utilizes the methyl donor S-adenosyl-L-methionine to catalyze the site-specific 2'-hydroxyl methylation of ribose moieties in rRNA and tRNA. Site specificity is provided by a guide RNA that base pairs with the substrate. Methylation occurs at a characteristic distance from the sequence involved in base pairing with the guide RNA. The polypeptide is Fibrillarin-like rRNA/tRNA 2'-O-methyltransferase (Aeropyrum pernix (strain ATCC 700893 / DSM 11879 / JCM 9820 / NBRC 100138 / K1)).